Reading from the N-terminus, the 514-residue chain is Na(+)/H(+) antiporter NhaB (514 aa).

12 consecutive transmembrane segments (helical) span residues 23–43 (LALLVFLIVNPFIFLANPFIA), 63–83 (PLLPGGLLAIEAVIIGMTSAA), 97–117 (LLLMFMVAGIYFMKQLLLFIF), 120–140 (LLLSIRSKMVLSLAFCVAAAF), 144–164 (FLDALTVVAVVISVAVGFYGI), 202–222 (LMMHAGVGTALGGVMTMVGEP), 238–258 (FFLRMSPVTVPVLVCGLLTCM), 303–323 (AIIGVWLVTALALHLAEVGLI), 357–377 (LTVFFSIVAVIIDQHLFAPII), 391–411 (LFYLFNGLLSSISDNVFVGTI), 447–467 (ATPNGQAAFLFLLTSALAPLI), and 475–495 (VWMALPYTIVLTLIGLLCVEF).

Belongs to the NhaB Na(+)/H(+) (TC 2.A.34) antiporter family.

It is found in the cell inner membrane. It catalyses the reaction 2 Na(+)(in) + 3 H(+)(out) = 2 Na(+)(out) + 3 H(+)(in). In terms of biological role, na(+)/H(+) antiporter that extrudes sodium in exchange for external protons. The sequence is that of Na(+)/H(+) antiporter NhaB from Salmonella heidelberg (strain SL476).